A 1534-amino-acid polypeptide reads, in one-letter code: Activating signal cointegrator 1 complex subunit 3 (1534 aa).

A Helicase ATP-binding 1 domain is found at 83 to 267 (ETAYNTNENL…FLHVNPFIGL (185 aa)). 96-103 (APTGAGKT) lines the ATP pocket. A DEVH box motif is present at residues 209 to 212 (DEVH). The Helicase C-terminal 1 domain maps to 294-500 (QLHDMEEVCY…SLADNLNAEI (207 aa)). Residues 576–849 (STDLGRTASH…GSEAVCIINF (274 aa)) form the SEC63 1 domain. The region spanning 898–1073 (HTLYHTDTNV…WLGIGQVGLF (176 aa)) is the Helicase ATP-binding 2 domain. 911-918 (APTGSGKT) contacts ATP. The DEIH box motif lies at 1015-1018 (DEIH). Residues 1106–1313 (PVFQAIRTHS…GTVTSKQDAM (208 aa)) form the Helicase C-terminal 2 domain. Residues 1374 to 1481 (PLTYGRISSY…TLPHIQKQEL (108 aa)) enclose the SEC63 2 domain.

It belongs to the helicase family.

Its subcellular location is the nucleus. The protein localises to the nucleus speckle. It localises to the cytoplasm. The protein resides in the cytosol. It catalyses the reaction Couples ATP hydrolysis with the unwinding of duplex DNA by translocating in the 3'-5' direction.. It carries out the reaction ATP + H2O = ADP + phosphate + H(+). In terms of biological role, 3'-5' DNA helicase involved in repair of alkylated DNA. Promotes DNA unwinding to generate single-stranded substrate needed for alkbh3, enabling alkbh3 to process alkylated N3-methylcytosine (3mC) within double-stranded regions. Also involved in activation of the ribosome quality control (RQC) pathway, a pathway that degrades nascent peptide chains during problematic translation. Drives the splitting of stalled ribosomes. The chain is Activating signal cointegrator 1 complex subunit 3 (ascc3) from Danio rerio (Zebrafish).